Consider the following 63-residue polypeptide: Large ribosomal subunit protein uL29 (63 aa).

This sequence belongs to the universal ribosomal protein uL29 family.

The sequence is that of Large ribosomal subunit protein uL29 from Pectobacterium carotovorum subsp. carotovorum (strain PC1).